The sequence spans 486 residues: HTH-type transcriptional regulator PrpR (486 aa).

The HTH cro/C1-type domain occupies 22 to 76 (LRRLRQERGLTQVALAKALDLSTSYVNQLENDQRPITVPVLLLLTERFDLSAQYF). The H-T-H motif DNA-binding region spans 33 to 52 (QVALAKALDLSTSYVNQLEN).

It belongs to the short-chain fatty acyl-CoA assimilation regulator (ScfR) family.

It functions in the pathway organic acid metabolism; propanoate degradation. Its pathway is steroid metabolism; cholesterol metabolism. Plays a key role in regulating expression of enzymes involved in the catabolism of short chain fatty acids (SCFA) via both the glyoxylate (acetyl degradation route) and the methylcitrate cycle (propionate degradation route). Required for intracellular growth in macrophages and for the assimilation of cholesterol-derived propionate. PrpR acts as a transcriptional activator of prpDC and icl genes when propionate is the main carbon source, and as a ramB repressor. During growth on propionate, PrpR also acts as a transcriptional repressor of dnaA, which encodes the DnaA initiator protein responsible for initiating chromosomal replication. It is possibly involved in the regulation of genes responsible for controlling cholesterol utilization. In Mycobacterium tuberculosis (strain ATCC 25618 / H37Rv), this protein is HTH-type transcriptional regulator PrpR.